A 160-amino-acid polypeptide reads, in one-letter code: Lipoprotein signal peptidase (160 aa).

The next 2 helical transmembrane spans lie at 60–80 (IEWL…AFFI) and 84–104 (LPFL…AGTV). Catalysis depends on residues D118 and D132. A helical transmembrane segment spans residues 128-148 (FNIADSCLTVGVIGLLLLYIV).

The protein belongs to the peptidase A8 family.

The protein resides in the cell membrane. It catalyses the reaction Release of signal peptides from bacterial membrane prolipoproteins. Hydrolyzes -Xaa-Yaa-Zaa-|-(S,diacylglyceryl)Cys-, in which Xaa is hydrophobic (preferably Leu), and Yaa (Ala or Ser) and Zaa (Gly or Ala) have small, neutral side chains.. It participates in protein modification; lipoprotein biosynthesis (signal peptide cleavage). This protein specifically catalyzes the removal of signal peptides from prolipoproteins. The chain is Lipoprotein signal peptidase from Dehalococcoides mccartyi (strain CBDB1).